Consider the following 75-residue polypeptide: Acyl carrier protein (75 aa).

Residues 1–74 (MLDKVKEIIV…DVINYIEANK (74 aa)) enclose the Carrier domain. An O-(pantetheine 4'-phosphoryl)serine modification is found at Ser34.

Belongs to the acyl carrier protein (ACP) family. Post-translationally, 4'-phosphopantetheine is transferred from CoA to a specific serine of apo-ACP by AcpS. This modification is essential for activity because fatty acids are bound in thioester linkage to the sulfhydryl of the prosthetic group.

The protein localises to the cytoplasm. Its pathway is lipid metabolism; fatty acid biosynthesis. Functionally, carrier of the growing fatty acid chain in fatty acid biosynthesis. The chain is Acyl carrier protein from Fusobacterium nucleatum subsp. nucleatum (strain ATCC 25586 / DSM 15643 / BCRC 10681 / CIP 101130 / JCM 8532 / KCTC 2640 / LMG 13131 / VPI 4355).